The following is a 2202-amino-acid chain: Nonribosomal peptide synthetase 5 (2202 aa).

Residues 58–443 are adenylation 1; the sequence is TYAQLDALSD…LLSYDKVDSA (386 aa). Positions 517-593 constitute a Carrier 1 domain; the sequence is ERGLGAVESV…NIAAAVVELS (77 aa). O-(pantetheine 4'-phosphoryl)serine is present on Ser-554. Residues 625-918 are condensation 1; sequence IAPMTDMQTR…INTLPLAINT (294 aa). An adenylation 2 region spans residues 1105 to 1482; sequence TYREFGRMTE…EVQSTISKLA (378 aa). Residues 1563 to 1643 enclose the Carrier 2 domain; sequence DLETDTQRVL…DLSLAIDELV (81 aa). O-(pantetheine 4'-phosphoryl)serine is present on Ser-1602. The tract at residues 1664-1952 is condensation 2; that stretch reads GQLPLSYLEK…FLDRLLLRIQ (289 aa). The segment at 2103-2129 is disordered; that stretch reads PVGLTPSHEGSAELTNGTNKTDSTTGQ. Residues 2115–2129 are compositionally biased toward polar residues; that stretch reads ELTNGTNKTDSTTGQ. The 73-residue stretch at 2130-2202 folds into the Carrier 3 domain; the sequence is QELENNLTDV…LELATCAVII (73 aa). Ser-2164 carries the post-translational modification O-(pantetheine 4'-phosphoryl)serine.

Belongs to the NRP synthetase family.

In terms of biological role, nonribosomal peptide synthesis (NRPS) is a key mechanism responsible for the biosynthesis of bioactive metabolites which are potentially contributing to organismal virulence. This Aspergillus fumigatus (strain ATCC MYA-4609 / CBS 101355 / FGSC A1100 / Af293) (Neosartorya fumigata) protein is Nonribosomal peptide synthetase 5 (NRPS5).